Consider the following 37-residue polypeptide: Putative preoptic regulatory factor 1 (37 aa).

2 propeptides span residues 1–7 (MPYSLQP) and 18–37 (FPLC…PPDL).

Belongs to the GnRH family. In terms of tissue distribution, preoptic area and testis.

It localises to the secreted. Functionally, precursor for a gonadotropin regulatory hormone (GNRH) related decapeptide. The sequence is that of Putative preoptic regulatory factor 1 (Porf1) from Rattus norvegicus (Rat).